A 210-amino-acid chain; its full sequence is uncharacterized protein (210 aa).

The first 21 residues, 1–21 (MLKMNVKKALVILVALALVAA), serve as a signal peptide directing secretion.

This is an uncharacterized protein from Archaeoglobus fulgidus (strain ATCC 49558 / DSM 4304 / JCM 9628 / NBRC 100126 / VC-16).